We begin with the raw amino-acid sequence, 122 residues long: Large ribosomal subunit protein uL14c (122 aa).

This sequence belongs to the universal ribosomal protein uL14 family. As to quaternary structure, part of the 50S ribosomal subunit.

Its subcellular location is the plastid. The protein resides in the chloroplast. Binds to 23S rRNA. The polypeptide is Large ribosomal subunit protein uL14c (Chlamydomonas reinhardtii (Chlamydomonas smithii)).